A 374-amino-acid chain; its full sequence is METKYHEYDDVQTKDTPSNKYSLNENRGDLIFLIMEIIGESCNSIYDSFTLDAPQFAFRGIDKTLSKDGEIGKLITIIKNLIKEQSYLLKSPMTNNNNNNNNNNNNNNNNNNNNNNNNNNNNNNNNNNNNNNNNNSYNNNNINDNNNSSNNNNNNLEYNTKGGEYISSNQSSPLSIYSTPPNPSSYVSSPLNQPANNTEAFQINGNELDAAQIKIKQLELELQKFKEAGALFAMNKINNSSAPPPPPKACAPPPPPPPPPPITVVKQPSFLMKKGVNNNNNNNNNNNSSNTNDSNNTNNTKPQPTFNFADVLLNRPQLKRVSKDRSPGGTPAKEPKNKSGSVEDALLKAIVSKFKHANSSPVKSHDDSSDSDFE.

Residues 1–13 (METKYHEYDDVQT) show a composition bias toward basic and acidic residues. Disordered stretches follow at residues 1 to 20 (METK…PSNK), 91 to 193 (SPMT…PLNQ), and 236 to 374 (KINN…SDFE). A compositionally biased stretch (low complexity) spans 95-155 (NNNNNNNNNN…NNSSNNNNNN (61 aa)). Over residues 166-193 (ISSNQSSPLSIYSTPPNPSSYVSSPLNQ) the composition is skewed to polar residues. Pro residues predominate over residues 242–262 (APPPPPKACAPPPPPPPPPPI). The segment covering 277–300 (NNNNNNNNNNNSSNTNDSNNTNNT) has biased composition (low complexity).

This is an uncharacterized protein from Dictyostelium discoideum (Social amoeba).